Reading from the N-terminus, the 715-residue chain is Phosphoribosylformylglycinamidine synthase subunit PurL (715 aa).

Residue histidine 33 is part of the active site. Residue tyrosine 36 participates in ATP binding. Glutamate 77 contacts Mg(2+). Substrate contacts are provided by residues 78-81 (SHNH) and arginine 100. Histidine 79 serves as the catalytic Proton acceptor. Mg(2+) is bound at residue aspartate 101. A substrate-binding site is contributed by glutamine 225. Aspartate 253 is a Mg(2+) binding site. 297 to 299 (ESQ) serves as a coordination point for substrate. Residues asparagine 476 and glycine 513 each coordinate ATP. Mg(2+) is bound at residue asparagine 514. Substrate is bound at residue serine 516.

It belongs to the FGAMS family. As to quaternary structure, monomer. Part of the FGAM synthase complex composed of 1 PurL, 1 PurQ and 2 PurS subunits.

The protein resides in the cytoplasm. The enzyme catalyses N(2)-formyl-N(1)-(5-phospho-beta-D-ribosyl)glycinamide + L-glutamine + ATP + H2O = 2-formamido-N(1)-(5-O-phospho-beta-D-ribosyl)acetamidine + L-glutamate + ADP + phosphate + H(+). It participates in purine metabolism; IMP biosynthesis via de novo pathway; 5-amino-1-(5-phospho-D-ribosyl)imidazole from N(2)-formyl-N(1)-(5-phospho-D-ribosyl)glycinamide: step 1/2. Functionally, part of the phosphoribosylformylglycinamidine synthase complex involved in the purines biosynthetic pathway. Catalyzes the ATP-dependent conversion of formylglycinamide ribonucleotide (FGAR) and glutamine to yield formylglycinamidine ribonucleotide (FGAM) and glutamate. The FGAM synthase complex is composed of three subunits. PurQ produces an ammonia molecule by converting glutamine to glutamate. PurL transfers the ammonia molecule to FGAR to form FGAM in an ATP-dependent manner. PurS interacts with PurQ and PurL and is thought to assist in the transfer of the ammonia molecule from PurQ to PurL. The chain is Phosphoribosylformylglycinamidine synthase subunit PurL from Methanosarcina barkeri (strain Fusaro / DSM 804).